Reading from the N-terminus, the 82-residue chain is RNA-binding protein Hfq (82 aa).

The Sm domain occupies aspartate 11–valine 72.

This sequence belongs to the Hfq family. Homohexamer.

Its function is as follows. RNA chaperone that binds small regulatory RNA (sRNAs) and mRNAs to facilitate mRNA translational regulation in response to envelope stress, environmental stress and changes in metabolite concentrations. Also binds with high specificity to tRNAs. The polypeptide is RNA-binding protein Hfq (Hyphomonas neptunium (strain ATCC 15444)).